Reading from the N-terminus, the 70-residue chain is uncharacterized protein (70 aa).

Residues 1 to 16 (MKLLLVLITLIIAALA) form the signal peptide.

This is an uncharacterized protein from Orgyia pseudotsugata (Douglas-fir tussock moth).